The following is a 364-amino-acid chain: Chorismate synthase (364 aa).

2 residues coordinate NADP(+): Arg-48 and Arg-54. Residues 129–131 (RSS), 243–244 (NA), Gly-288, 303–307 (KPTSS), and Arg-329 each bind FMN.

This sequence belongs to the chorismate synthase family. Homotetramer. The cofactor is FMNH2.

The enzyme catalyses 5-O-(1-carboxyvinyl)-3-phosphoshikimate = chorismate + phosphate. It participates in metabolic intermediate biosynthesis; chorismate biosynthesis; chorismate from D-erythrose 4-phosphate and phosphoenolpyruvate: step 7/7. Its function is as follows. Catalyzes the anti-1,4-elimination of the C-3 phosphate and the C-6 proR hydrogen from 5-enolpyruvylshikimate-3-phosphate (EPSP) to yield chorismate, which is the branch point compound that serves as the starting substrate for the three terminal pathways of aromatic amino acid biosynthesis. This reaction introduces a second double bond into the aromatic ring system. In Chelativorans sp. (strain BNC1), this protein is Chorismate synthase.